The following is a 414-amino-acid chain: Serine hydroxymethyltransferase (414 aa).

(6S)-5,6,7,8-tetrahydrofolate-binding positions include leucine 121 and 125 to 127 (GHL). At lysine 229 the chain carries N6-(pyridoxal phosphate)lysine.

It belongs to the SHMT family. As to quaternary structure, homodimer. It depends on pyridoxal 5'-phosphate as a cofactor.

The protein localises to the cytoplasm. It carries out the reaction (6R)-5,10-methylene-5,6,7,8-tetrahydrofolate + glycine + H2O = (6S)-5,6,7,8-tetrahydrofolate + L-serine. It functions in the pathway one-carbon metabolism; tetrahydrofolate interconversion. Its pathway is amino-acid biosynthesis; glycine biosynthesis; glycine from L-serine: step 1/1. Its function is as follows. Catalyzes the reversible interconversion of serine and glycine with tetrahydrofolate (THF) serving as the one-carbon carrier. This reaction serves as the major source of one-carbon groups required for the biosynthesis of purines, thymidylate, methionine, and other important biomolecules. Also exhibits THF-independent aldolase activity toward beta-hydroxyamino acids, producing glycine and aldehydes, via a retro-aldol mechanism. The protein is Serine hydroxymethyltransferase of Paracidovorax citrulli (strain AAC00-1) (Acidovorax citrulli).